Reading from the N-terminus, the 171-residue chain is Large ribosomal subunit protein uL15 (171 aa).

The segment covering 1–10 (MKLNEISDNN) has biased composition (polar residues). Disordered regions lie at residues 1-44 (MKLN…RSGV) and 150-171 (LPEA…NKAK). A compositionally biased stretch (gly residues) spans 21–35 (RGIGSGKGKTAGRGQ). Positions 157–171 (EQEKKAARREANKAK) are enriched in basic and acidic residues.

Belongs to the universal ribosomal protein uL15 family. In terms of assembly, part of the 50S ribosomal subunit.

Binds to the 23S rRNA. This is Large ribosomal subunit protein uL15 from Novosphingobium aromaticivorans (strain ATCC 700278 / DSM 12444 / CCUG 56034 / CIP 105152 / NBRC 16084 / F199).